Here is a 251-residue protein sequence, read N- to C-terminus: Triosephosphate isomerase (251 aa).

Position 9 to 11 (9 to 11 (NWK)) interacts with substrate. Catalysis depends on H94, which acts as the Electrophile. The active-site Proton acceptor is the E166. Residues G172, S211, and 232–233 (GG) each bind substrate.

It belongs to the triosephosphate isomerase family. As to quaternary structure, homodimer.

It is found in the cytoplasm. It catalyses the reaction D-glyceraldehyde 3-phosphate = dihydroxyacetone phosphate. It participates in carbohydrate biosynthesis; gluconeogenesis. It functions in the pathway carbohydrate degradation; glycolysis; D-glyceraldehyde 3-phosphate from glycerone phosphate: step 1/1. In terms of biological role, involved in the gluconeogenesis. Catalyzes stereospecifically the conversion of dihydroxyacetone phosphate (DHAP) to D-glyceraldehyde-3-phosphate (G3P). In Stenotrophomonas maltophilia (strain R551-3), this protein is Triosephosphate isomerase.